The sequence spans 600 residues: MLPRVARLNTHLVSLALLGFQITYGAITYQHPDDLPSDVDYDFIVAGGGTAGLVVASRLSENPDWNILVIEAGPSNKDAPETRVPGLAGSLPASRTDWNYTTIPQDALGGRSLNYSRAKVLGGCSSHNSMVYTRGSKDDWNHWADITGDQGLSWDSILPVMKKAEKFSKDFSNQSVDGHIDPSMHGHDGLLSVVSSYTNVSFNDLLLETTKELSDEFPFKLDLNDGNPHGLAWTQYTIDHRAERSSSATSYLESTRDNVHVLVNSRVTRIFSAGNGTDFRSVEFAVDANSPKKVLTAKKEVILSAGVIASPQVLMNSGIGGREELQAIGVDTLIDNPSVGKNLSDQAATLLMFDTTLPNTDYDVAAALTEWEDSRSGPMAYGARLNHLTWVRLLDDKLNGSDPSSGKNSPHIEFQFMQISHQLPPADAPNQVKLPDPDSIGAVLLLAVVNLYSVSHGSIILNDNDPFANPMIDLNMFGDQKDIAILREGVRSARRMFSSQAFKDVVNGTVYPPADVTSDEDLDAFLRTSAISYWHGVGTLSMSPQNASWGVVDPDFRVKGTSGLRVVDASVIPYAPAGHTQVPVYTFAEHASVLIAKSYA.

The signal sequence occupies residues 1-25 (MLPRVARLNTHLVSLALLGFQITYG). N-linked (GlcNAc...) asparagine glycosylation is found at asparagine 99 and asparagine 114. Residue histidine 127 is modified to Tele-8alpha-FAD histidine. 6 N-linked (GlcNAc...) asparagine glycosylation sites follow: asparagine 173, asparagine 199, asparagine 275, asparagine 342, asparagine 399, and asparagine 507. Histidine 535 acts as the Proton acceptor in catalysis. N-linked (GlcNAc...) asparagine glycosylation occurs at asparagine 546. Histidine 579 is a catalytic residue.

It belongs to the GMC oxidoreductase family. Monomer. Requires FAD as cofactor. Post-translationally, N-glycosylated.

The protein localises to the secreted. It carries out the reaction pyranose + acceptor = pyranos-2-ulose + reduced acceptor.. The catalysed reaction is pyranose + acceptor = pyranos-3-ulose + reduced acceptor.. It catalyses the reaction pyranose + acceptor = pyranos-2,3-diulose + reduced acceptor.. The enzyme catalyses a pyranoside + acceptor = a pyranosid-3-ulose + reduced acceptor.. It carries out the reaction a pyranoside + acceptor = a pyranosid-3,4-diulose + reduced acceptor.. Functionally, catalyzes the single-oxidation or sequential double oxidation reaction of carbohydrates primarily at carbon-2 and/or carbon-3 with the concomitant reduction of the flavin. The enzyme exhibits a broad sugar substrate specificity, oxidizing different aldopyranoses to the corresponding C-1, C-2, C-3 or C-1,2, C-2,3 and C-3,4 (di)dehydro sugars with substrate-specific regioselectivity. Accepts only a narrow range of electron acceptors such as substituted benzoquinones and complexed metal ions and reacts extremely slowly with O(2) as acceptor. May play a role in the natural recycling of plant matter by oxidizing all major monosaccharides in lignocellulose and by reducing quinone compounds or reactive radical species generated during lignin depolymerization. The protein is Pyranose dehydrogenase 3 of Leucoagaricus meleagris (Western flat-topped agaric).